The chain runs to 261 residues: Sepiapterin reductase (261 aa).

Met1 is modified (N-acetylmethionine). An NADP(+)-binding site is contributed by 14–20 (GASRGFG). Ser32 is modified (phosphoserine). Residues 42–43 (RN) and 69–70 (DL) each bind NADP(+). Ser103 bears the Phosphoserine mark. Residues 157–158 (SL) and Tyr170 contribute to the substrate site. Lys174 serves as a coordination point for NADP(+). Gly199 is a substrate binding site. Position 201-206 (201-206 (LDTDMQ)) interacts with NADP(+). Ser213 carries the phosphoserine; by CaMK2; in vitro modification. Position 257 (Asp257) interacts with substrate.

It belongs to the sepiapterin reductase family. Homodimer. In vitro phosphorylation of Ser-213 by CaMK2 does not change kinetic parameters.

It is found in the cytoplasm. It carries out the reaction L-erythro-7,8-dihydrobiopterin + NADP(+) = L-sepiapterin + NADPH + H(+). The catalysed reaction is (6R)-L-erythro-5,6,7,8-tetrahydrobiopterin + 2 NADP(+) = 6-pyruvoyl-5,6,7,8-tetrahydropterin + 2 NADPH + 2 H(+). Functionally, catalyzes the final one or two reductions in tetra-hydrobiopterin biosynthesis to form 5,6,7,8-tetrahydrobiopterin. The polypeptide is Sepiapterin reductase (SPR) (Homo sapiens (Human)).